A 71-amino-acid chain; its full sequence is Peptide Ctri9819 (71 aa).

A signal peptide spans 1-23 (MKTVSTVAILAIFLLIVITTIET). At leucine 34 the chain carries Leucine amide. Residues 38 to 71 (SKLETFKRIARTLSAGISAKRSLEDVNSLTGMSS) constitute a propeptide that is removed on maturation.

The protein belongs to the non-disulfide-bridged peptide (NDBP) superfamily. Short antimicrobial peptide (group 4) family. In terms of tissue distribution, expressed by the venom gland.

The protein localises to the secreted. In terms of biological role, antimicrobial peptide. The chain is Peptide Ctri9819 from Chaerilus tricostatus (Scorpion).